Here is a 71-residue protein sequence, read N- to C-terminus: Beta-defensin 7 (71 aa).

A signal peptide spans 1 to 22 (MRIHYVLFAFLLVLLSPFAAFS). The residue at position 23 (glutamine 23) is a Pyrrolidone carboxylic acid. Residues 23-25 (QDI) constitute a propeptide that is removed on maturation. Intrachain disulfides connect cysteine 31/cysteine 58, cysteine 38/cysteine 52, and cysteine 42/cysteine 59.

It belongs to the beta-defensin family. LAP/TAP subfamily.

It is found in the secreted. Its function is as follows. Has bactericidal activity. The sequence is that of Beta-defensin 7 (Defb7) from Mus musculus (Mouse).